Here is a 302-residue protein sequence, read N- to C-terminus: NAD kinase 1 (302 aa).

Catalysis depends on Asp-67, which acts as the Proton acceptor. Residues 67–68 (DG), Arg-72, 148–149 (ND), Lys-178, and Asp-180 contribute to the NAD(+) site.

It belongs to the NAD kinase family. Requires a divalent metal cation as cofactor.

The protein resides in the cytoplasm. The enzyme catalyses NAD(+) + ATP = ADP + NADP(+) + H(+). In terms of biological role, involved in the regulation of the intracellular balance of NAD and NADP, and is a key enzyme in the biosynthesis of NADP. Catalyzes specifically the phosphorylation on 2'-hydroxyl of the adenosine moiety of NAD to yield NADP. This is NAD kinase 1 from Prochlorococcus marinus (strain NATL2A).